The primary structure comprises 62 residues: Andropin (62 aa).

Residues 1 to 22 form the signal peptide; that stretch reads MKYFSVLVVLTLILAIVDQSDA.

The protein belongs to the andropin family. In terms of tissue distribution, ejaculatory duct of adult males.

It localises to the secreted. In terms of biological role, male-specific peptide with moderate activity against Gram-positive bacteria. The protein is Andropin (Anp) of Drosophila teissieri (Fruit fly).